A 341-amino-acid polypeptide reads, in one-letter code: Ferrochelatase (341 aa).

Fe cation contacts are provided by histidine 196 and glutamate 277.

It belongs to the ferrochelatase family.

It is found in the cytoplasm. It catalyses the reaction heme b + 2 H(+) = protoporphyrin IX + Fe(2+). It functions in the pathway porphyrin-containing compound metabolism; protoheme biosynthesis; protoheme from protoporphyrin-IX: step 1/1. In terms of biological role, catalyzes the ferrous insertion into protoporphyrin IX. This is Ferrochelatase from Synechococcus sp. (strain JA-3-3Ab) (Cyanobacteria bacterium Yellowstone A-Prime).